A 207-amino-acid polypeptide reads, in one-letter code: Small ribosomal subunit protein uS4c (207 aa).

The 62-residue stretch at 92 to 153 folds into the S4 RNA-binding domain; it reads MRLDNILFRL…PKTYQSILSK (62 aa).

The protein belongs to the universal ribosomal protein uS4 family. In terms of assembly, part of the 30S ribosomal subunit. Contacts protein S5. The interaction surface between S4 and S5 is involved in control of translational fidelity.

The protein localises to the plastid. The protein resides in the chloroplast. In terms of biological role, one of the primary rRNA binding proteins, it binds directly to 16S rRNA where it nucleates assembly of the body of the 30S subunit. With S5 and S12 plays an important role in translational accuracy. This Equisetum laevigatum (Smooth horsetail) protein is Small ribosomal subunit protein uS4c (rps4).